The primary structure comprises 495 residues: Cytochrome P450 monooxygenase cnsC (495 aa).

Residue C434 coordinates heme.

It belongs to the cytochrome P450 family. The cofactor is heme.

It participates in alkaloid biosynthesis. Cytochrome P450 monooxygenase; part of the gene cluster that mediates the biosynthesis of communesins, a prominent class of indole alkaloids with great potential as pharmaceuticals. Communesins are biosynthesized by the coupling of tryptamine and aurantioclavine, two building blocks derived from L-tryptophan. The L-tryptophan decarboxylase cnsB converts L-tryptophan to tryptamine, whereas the tryptophan dimethylallyltransferase cnsF converts L-tryptophan to 4-dimethylallyl tryptophan which is further transformed to aurantioclavine by the aurantioclavine synthase cnsA, probably aided by the catalase cnsD. The cytochrome P450 monooxygenase cnsC catalyzes the heterodimeric coupling between the two different indole moieties, tryptamine and aurantioclavine, to construct vicinal quaternary stereocenters and yield the heptacyclic communesin scaffold. The O-methyltransferase cnsE then methylates the communesin scaffold to produce communesin K, the simplest characterized communesin that contains the heptacyclic core. The dioxygenase cnsJ converts communesin K into communesin I. Acylation to introduce the hexadienyl group at position N16 of communesin I by the acyltransferase cnsK leads to the production of communesin B. The hexadienyl group is produced by the highly reducing polyketide synthase cnsI, before being hydrolytically removed from cnsI by the serine hydrolase cnsH, converted into hexadienyl-CoA by the CoA ligase cnsG, and then transferred to communesin I by cnsK. Surprisingly, cnsK may also be a promiscuous acyltransferase that can tolerate a range of acyl groups, including acetyl-, propionyl-, and butyryl-CoA, which lead to communesins A, G and H respectively. The roles of the alpha-ketoglutarate-dependent dioxygenases cnsM and cnsP have still to be determined. This chain is Cytochrome P450 monooxygenase cnsC, found in Penicillium expansum (Blue mold rot fungus).